A 204-amino-acid chain; its full sequence is MSELLDERTMAFAGILQAIGQVQHIARHGNSDNDSLAASLNTVLVTNPDSTSDVYADKTALNKGYQLIVNQLGDSKDKDVEITRYLVGILALERKLSRGNAMGLLAERINQVHRQLHHFSITDEQVIANFAGIYSDVISTLGPKIQISGNPEFLKQNQVQEKIRALLLSAMRSAVLWRQLGGKRRHLVFARKSILDIANKSLTL.

This sequence belongs to the HflD family.

The protein localises to the cytoplasm. It localises to the cell inner membrane. The sequence is that of High frequency lysogenization protein HflD homolog from Shewanella woodyi (strain ATCC 51908 / MS32).